Reading from the N-terminus, the 70-residue chain is Putative defensin-like protein 73 (70 aa).

Positions 1–29 (MNCKIEFMSFLVMTSIVILFLFVSGKVEA) are cleaved as a signal peptide. 4 cysteine pairs are disulfide-bonded: Cys33–Cys68, Cys37–Cys57, Cys43–Cys66, and Cys47–Cys67.

The protein belongs to the DEFL family.

The protein resides in the secreted. This Arabidopsis thaliana (Mouse-ear cress) protein is Putative defensin-like protein 73 (LCR44).